The sequence spans 126 residues: Aspartate 1-decarboxylase (126 aa).

Ser-25 acts as the Schiff-base intermediate with substrate; via pyruvic acid in catalysis. A Pyruvic acid (Ser) modification is found at Ser-25. Thr-57 lines the substrate pocket. Tyr-58 (proton donor) is an active-site residue. 73 to 75 (GAA) serves as a coordination point for substrate.

Belongs to the PanD family. As to quaternary structure, heterooctamer of four alpha and four beta subunits. Pyruvate serves as cofactor. In terms of processing, is synthesized initially as an inactive proenzyme, which is activated by self-cleavage at a specific serine bond to produce a beta-subunit with a hydroxyl group at its C-terminus and an alpha-subunit with a pyruvoyl group at its N-terminus.

The protein localises to the cytoplasm. The enzyme catalyses L-aspartate + H(+) = beta-alanine + CO2. It participates in cofactor biosynthesis; (R)-pantothenate biosynthesis; beta-alanine from L-aspartate: step 1/1. Its function is as follows. Catalyzes the pyruvoyl-dependent decarboxylation of aspartate to produce beta-alanine. This is Aspartate 1-decarboxylase from Escherichia coli O6:H1 (strain CFT073 / ATCC 700928 / UPEC).